The primary structure comprises 757 residues: Protein transport protein SEC23-2 (757 aa).

Residues C56, C61, C80, and C83 each coordinate Zn(2+).

Belongs to the SEC23/SEC24 family. SEC23 subfamily. As to quaternary structure, the COPII coat is composed of at least 5 proteins: the SEC23/24 complex, the SEC13/31 complex, and the protein SAR1.

The protein localises to the cytoplasm. It is found in the cytoplasmic vesicle. The protein resides in the COPII-coated vesicle membrane. It localises to the endoplasmic reticulum membrane. Its subcellular location is the golgi apparatus membrane. Its function is as follows. Component of the coat protein complex II (COPII) which promotes the formation of transport vesicles from the endoplasmic reticulum (ER). The coat has two main functions, the physical deformation of the endoplasmic reticulum membrane into vesicles and the selection of cargo molecules. This is Protein transport protein SEC23-2 (SEC232) from Candida glabrata (strain ATCC 2001 / BCRC 20586 / JCM 3761 / NBRC 0622 / NRRL Y-65 / CBS 138) (Yeast).